The following is a 70-amino-acid chain: Deleted in esophageal cancer 1 (70 aa).

Expressed in many tissues, with highest expression in prostate and testis. Reduced expression in esophageal carcinomas.

Candidate tumor suppressor. The protein is Deleted in esophageal cancer 1 of Homo sapiens (Human).